Consider the following 334-residue polypeptide: MLSSRQYGLSDVLRALEESRKLADADRSTDQGLLGPFYNDLGMGYFQLQLFPLAVEAFLQALPLCRQPSEQATVLQNLGMTHNVLGNYWEAQEFHQKAASLHGSVGQRWEQGRSFSGLAFSLSQLGDHRAAWDSYLHALQAAQDTGDVKGQWQACEGLGAAAARLGQHDQALKYYKEALALCQHEPSSVRERLVAKLADAMRTFVAQEKIAQARFLPSAPGKLQTSRKAKTSARVQSSAEDAQESQWEGEASEGGHEKKEMEGLVNTATVLGPQRQNRATTHLPSGGPSPSGEEYPFIIAPKKLRVSRSSTWAKEALGRNFQRTRIQSGLCSIM.

TPR repeat units lie at residues 35–68 (GPFY…CRQP), 72–105 (ATVL…HGSV), 112–145 (GRSF…AQDT), and 152–185 (WQAC…CQHE). Positions 220 to 258 (PGKLQTSRKAKTSARVQSSAEDAQESQWEGEASEGGHEK) are disordered. Residues 233–246 (ARVQSSAEDAQESQ) show a composition bias toward polar residues.

The protein is Tetratricopeptide repeat protein 24 (Ttc24) of Mus musculus (Mouse).